The chain runs to 445 residues: Tubulin beta chain (445 aa).

The GTP site is built by Gln11, Glu69, Ser138, Gly142, Thr143, Gly144, Asn204, and Asn226. Glu69 serves as a coordination point for Mg(2+).

It belongs to the tubulin family. As to quaternary structure, dimer of alpha and beta chains. A typical microtubule is a hollow water-filled tube with an outer diameter of 25 nm and an inner diameter of 15 nM. Alpha-beta heterodimers associate head-to-tail to form protofilaments running lengthwise along the microtubule wall with the beta-tubulin subunit facing the microtubule plus end conferring a structural polarity. Microtubules usually have 13 protofilaments but different protofilament numbers can be found in some organisms and specialized cells. Mg(2+) serves as cofactor.

The protein localises to the cytoplasm. It localises to the cytoskeleton. Its function is as follows. Tubulin is the major constituent of microtubules, a cylinder consisting of laterally associated linear protofilaments composed of alpha- and beta-tubulin heterodimers. Microtubules grow by the addition of GTP-tubulin dimers to the microtubule end, where a stabilizing cap forms. Below the cap, tubulin dimers are in GDP-bound state, owing to GTPase activity of alpha-tubulin. This Coprinopsis cinerea (strain Okayama-7 / 130 / ATCC MYA-4618 / FGSC 9003) (Inky cap fungus) protein is Tubulin beta chain.